A 329-amino-acid chain; its full sequence is 31 kDa immunogenic protein (329 aa).

An N-terminal signal peptide occupies residues 1 to 28 (MKFGSKIRRLAVAAVAGAIALGASFAVA).

The polypeptide is 31 kDa immunogenic protein (bcsP31) (Brucella abortus biovar 1 (strain 9-941)).